A 421-amino-acid polypeptide reads, in one-letter code: tRNA(Ile)-lysidine synthase (421 aa).

26–31 serves as a coordination point for ATP; that stretch reads SGGADS.

The protein belongs to the tRNA(Ile)-lysidine synthase family.

The protein resides in the cytoplasm. It carries out the reaction cytidine(34) in tRNA(Ile2) + L-lysine + ATP = lysidine(34) in tRNA(Ile2) + AMP + diphosphate + H(+). Functionally, ligates lysine onto the cytidine present at position 34 of the AUA codon-specific tRNA(Ile) that contains the anticodon CAU, in an ATP-dependent manner. Cytidine is converted to lysidine, thus changing the amino acid specificity of the tRNA from methionine to isoleucine. The chain is tRNA(Ile)-lysidine synthase from Streptococcus thermophilus (strain CNRZ 1066).